We begin with the raw amino-acid sequence, 357 residues long: Sulfate/thiosulfate import ATP-binding protein CysA (357 aa).

One can recognise an ABC transporter domain in the interval 3–237; it reads IQIQGVSKQY…PASPFVYDFL (235 aa). 35–42 contacts ATP; the sequence is GPSGSGKT.

This sequence belongs to the ABC transporter superfamily. Sulfate/tungstate importer (TC 3.A.1.6) family. The complex is composed of two ATP-binding proteins (CysA), two transmembrane proteins (CysT and CysW) and a solute-binding protein (CysP).

Its subcellular location is the cell membrane. The enzyme catalyses sulfate(out) + ATP + H2O = sulfate(in) + ADP + phosphate + H(+). It catalyses the reaction thiosulfate(out) + ATP + H2O = thiosulfate(in) + ADP + phosphate + H(+). Part of the ABC transporter complex CysAWTP involved in sulfate/thiosulfate import. Responsible for energy coupling to the transport system. In Bacillus cereus (strain ATCC 14579 / DSM 31 / CCUG 7414 / JCM 2152 / NBRC 15305 / NCIMB 9373 / NCTC 2599 / NRRL B-3711), this protein is Sulfate/thiosulfate import ATP-binding protein CysA.